The sequence spans 482 residues: Protein farnesyltransferase subunit beta (482 aa).

PFTB repeat units follow at residues 131–172, 182–223, 230–271, and 278–319; these read ESNA…VTLG, REKM…SILN, TQGL…ILIN, and LDSL…VLLQ. (2E,6E)-farnesyl diphosphate contacts are provided by residues 256 to 259 and 298 to 301; these read HGGY and RTNK. Positions 304 and 306 each coordinate Zn(2+). 307–310 provides a ligand contact to (2E,6E)-farnesyl diphosphate; it reads YTFW. The interval 329–372 is disordered; that stretch reads VHGSSHISEGTNEEHHAHDEDDLEDSDDDDDSDEDNDEDSVNGH. Over residues 348 to 368 the composition is skewed to acidic residues; it reads EDDLEDSDDDDDSDEDNDEDS. A PFTB 5 repeat occupies 391–433; the sequence is SLGLQRYVLLCSKIPDGGFRDKPRKPRDFYHTCYCLSGLSVAQ. His-421 serves as a coordination point for Zn(2+).

This sequence belongs to the protein prenyltransferase subunit beta family. As to quaternary structure, heterodimer of FTA and FTB (farnesyltransferase). Heterodimer of an alpha and a beta subunit. It depends on Zn(2+) as a cofactor.

The catalysed reaction is L-cysteinyl-[protein] + (2E,6E)-farnesyl diphosphate = S-(2E,6E)-farnesyl-L-cysteinyl-[protein] + diphosphate. Catalyzes the transfer of a farnesyl moiety from farnesyl diphosphate to a cysteine at the fourth position from the C-terminus of several proteins having the C-terminal sequence Cys-aliphatic-aliphatic-X (CaaX). The beta subunit is responsible for peptide-binding. Acts as an abscisic acid (ABA) negative regulator by mediating ASG2 farnesylation and consequently monitoring its subcellular localization. Involved in responses to salt (NaCl) and osmotic (e.g. in response to mannitol and PEG) stresses. This Arabidopsis thaliana (Mouse-ear cress) protein is Protein farnesyltransferase subunit beta (FTB).